A 346-amino-acid polypeptide reads, in one-letter code: NADH-ubiquinone oxidoreductase chain 2 (346 aa).

11 consecutive transmembrane segments (helical) span residues 1 to 21 (MNPH…TITI), 25 to 45 (HWVL…PLIS), 60 to 80 (FLTQ…NAWA), 95 to 115 (CLLL…HFWF), 124 to 144 (LMTA…LLLM), 149 to 169 (LNPA…GWMG), 178 to 195 (ILAF…IILV), 200 to 219 (LALL…FMAL), 242 to 262 (ATLM…GFMP), 274 to 294 (EMTP…FFYL), and 326 to 346 (AILA…HAIV).

Belongs to the complex I subunit 2 family.

The protein resides in the mitochondrion inner membrane. The enzyme catalyses a ubiquinone + NADH + 5 H(+)(in) = a ubiquinol + NAD(+) + 4 H(+)(out). Functionally, core subunit of the mitochondrial membrane respiratory chain NADH dehydrogenase (Complex I) that is believed to belong to the minimal assembly required for catalysis. Complex I functions in the transfer of electrons from NADH to the respiratory chain. The immediate electron acceptor for the enzyme is believed to be ubiquinone. This chain is NADH-ubiquinone oxidoreductase chain 2 (MT-ND2), found in Mareca falcata (Falcated duck).